The following is a 257-amino-acid chain: Phosphate import ATP-binding protein PstB (257 aa).

Residues 11–252 (LEVRDLNFFY…PQKKATEDYI (242 aa)) form the ABC transporter domain. 43–50 (GPSGCGKS) serves as a coordination point for ATP.

The protein belongs to the ABC transporter superfamily. Phosphate importer (TC 3.A.1.7) family. As to quaternary structure, the complex is composed of two ATP-binding proteins (PstB), two transmembrane proteins (PstC and PstA) and a solute-binding protein (PstS).

It is found in the cell inner membrane. The enzyme catalyses phosphate(out) + ATP + H2O = ADP + 2 phosphate(in) + H(+). Its function is as follows. Part of the ABC transporter complex PstSACB involved in phosphate import. Responsible for energy coupling to the transport system. This Chromobacterium violaceum (strain ATCC 12472 / DSM 30191 / JCM 1249 / CCUG 213 / NBRC 12614 / NCIMB 9131 / NCTC 9757 / MK) protein is Phosphate import ATP-binding protein PstB.